Reading from the N-terminus, the 699-residue chain is Macoilin-2 (699 aa).

Helical transmembrane passes span 28–48, 75–95, 120–140, and 154–174; these read TFLY…DFVL, AFSV…LLFI, VCLP…AIRF, and FAAH…KSYV. 4 disordered regions span residues 219 to 289, 322 to 411, 432 to 451, and 679 to 699; these read AAAA…SILP, LLKD…PNNQ, LQAS…SLGT, and FMDT…PLKK. Residues Asn-241, Asn-267, Asn-345, and Asn-365 are each glycosylated (N-linked (GlcNAc...) asparagine). Over residues 257-271 the composition is skewed to basic and acidic residues; sequence LEYREKERGKNESKK. Positions 329 to 346 are enriched in low complexity; it reads SSSSSSTSSNSNKNYKNA. Over residues 366 to 382 the composition is skewed to low complexity; it reads GSVPSSSGPSSSASSSS. Asn-690 carries an N-linked (GlcNAc...) asparagine glycan.

The protein belongs to the macoilin family.

It is found in the nucleus membrane. The protein resides in the cell projection. The protein localises to the axon. Its subcellular location is the rough endoplasmic reticulum membrane. Functionally, may play a role in the regulation of neuronal activity. The sequence is that of Macoilin-2 from Danio rerio (Zebrafish).